We begin with the raw amino-acid sequence, 232 residues long: 2-C-methyl-D-erythritol 4-phosphate cytidylyltransferase (232 aa).

This sequence belongs to the IspD/TarI cytidylyltransferase family. IspD subfamily.

The catalysed reaction is 2-C-methyl-D-erythritol 4-phosphate + CTP + H(+) = 4-CDP-2-C-methyl-D-erythritol + diphosphate. It participates in isoprenoid biosynthesis; isopentenyl diphosphate biosynthesis via DXP pathway; isopentenyl diphosphate from 1-deoxy-D-xylulose 5-phosphate: step 2/6. Its function is as follows. Catalyzes the formation of 4-diphosphocytidyl-2-C-methyl-D-erythritol from CTP and 2-C-methyl-D-erythritol 4-phosphate (MEP). In Synechococcus sp. (strain ATCC 27144 / PCC 6301 / SAUG 1402/1) (Anacystis nidulans), this protein is 2-C-methyl-D-erythritol 4-phosphate cytidylyltransferase.